Here is a 312-residue protein sequence, read N- to C-terminus: Pantothenate kinase (312 aa).

97–104 (GSVAVGKS) is a binding site for ATP.

It belongs to the prokaryotic pantothenate kinase family.

The protein localises to the cytoplasm. It catalyses the reaction (R)-pantothenate + ATP = (R)-4'-phosphopantothenate + ADP + H(+). It functions in the pathway cofactor biosynthesis; coenzyme A biosynthesis; CoA from (R)-pantothenate: step 1/5. This chain is Pantothenate kinase, found in Mycobacterium bovis (strain BCG / Pasteur 1173P2).